The chain runs to 609 residues: Probable translation initiation factor IF-2 (609 aa).

Residues 12–230 (LRQPIVAVLG…VLAGLAQRYM (219 aa)) enclose the tr-type G domain. The interval 21–28 (GHVDHGKT) is G1. 21–28 (GHVDHGKT) is a GTP binding site. Residues 46 to 50 (QITQH) are G2. Residues 86-89 (DTPG) form a G3 region. GTP-binding positions include 86-90 (DTPGH) and 140-143 (NKID). Residues 140–143 (NKID) form a G4 region. The G5 stretch occupies residues 208–210 (SAK).

Belongs to the TRAFAC class translation factor GTPase superfamily. Classic translation factor GTPase family. IF-2 subfamily.

In terms of biological role, function in general translation initiation by promoting the binding of the formylmethionine-tRNA to ribosomes. Seems to function along with eIF-2. The polypeptide is Probable translation initiation factor IF-2 (Ignicoccus hospitalis (strain KIN4/I / DSM 18386 / JCM 14125)).